Consider the following 258-residue polypeptide: Probable succinate transporter subunit YjjP (258 aa).

5 consecutive transmembrane segments (helical) span residues 116–137 (YPRWLLVLMVGLSCACFCKLNN), 143–160 (AVVTFFASTVAMYIRQLL), 171–191 (FCITAFVATTISGLMLRLPAF), 197–217 (IAMAASVLLLVPGFPLINAVA), and 231–251 (WAIASLLTLATCIGVVMAMTM).

This sequence belongs to the ThrE exporter (TC 2.A.79) family. As to quaternary structure, the transporter is composed of YjjB and YjjP.

The protein localises to the cell inner membrane. Involved in succinate export with YjjB. Both proteins are required for export. Participates in succinate export, but also in the export of other dicarboxylates, such as fumarate and malate. Contributes to succinate production under both aerobic and anaerobic conditions, and increases fumarate and malate production during anaerobic succinate production. The chain is Probable succinate transporter subunit YjjP from Klebsiella aerogenes (strain ATCC 13048 / DSM 30053 / CCUG 1429 / JCM 1235 / KCTC 2190 / NBRC 13534 / NCIMB 10102 / NCTC 10006 / CDC 819-56) (Enterobacter aerogenes).